Consider the following 32-residue polypeptide: Conotoxin Cltx-4 (32 aa).

4-hydroxyproline occurs at positions 2, 24, 28, and 30. Ser-32 is modified (serine amide).

Post-translationally, contains 4 disulfide bonds. As to expression, expressed by the venom duct.

Its subcellular location is the secreted. This Californiconus californicus (California cone) protein is Conotoxin Cltx-4.